Reading from the N-terminus, the 121-residue chain is Small ribosomal subunit protein uS13 (121 aa).

Residues 92–121 (RKGLPCRGQRTRTNARTRKGPRKAAQSLKK) are disordered.

Belongs to the universal ribosomal protein uS13 family. As to quaternary structure, part of the 30S ribosomal subunit. Forms a loose heterodimer with protein S19. Forms two bridges to the 50S subunit in the 70S ribosome.

In terms of biological role, located at the top of the head of the 30S subunit, it contacts several helices of the 16S rRNA. In the 70S ribosome it contacts the 23S rRNA (bridge B1a) and protein L5 of the 50S subunit (bridge B1b), connecting the 2 subunits; these bridges are implicated in subunit movement. Contacts the tRNAs in the A and P-sites. The chain is Small ribosomal subunit protein uS13 from Janthinobacterium sp. (strain Marseille) (Minibacterium massiliensis).